The following is a 335-amino-acid chain: Glycerol-3-phosphate dehydrogenase [NAD(P)+] (335 aa).

NADPH contacts are provided by W12 and K106. Sn-glycerol 3-phosphate-binding residues include K106, G136, and S138. NADPH is bound at residue A140. K191, D244, S254, R255, and N256 together coordinate sn-glycerol 3-phosphate. The Proton acceptor role is filled by K191. R255 is an NADPH binding site. Positions 279 and 281 each coordinate NADPH.

It belongs to the NAD-dependent glycerol-3-phosphate dehydrogenase family.

The protein localises to the cytoplasm. The enzyme catalyses sn-glycerol 3-phosphate + NAD(+) = dihydroxyacetone phosphate + NADH + H(+). The catalysed reaction is sn-glycerol 3-phosphate + NADP(+) = dihydroxyacetone phosphate + NADPH + H(+). It functions in the pathway membrane lipid metabolism; glycerophospholipid metabolism. In terms of biological role, catalyzes the reduction of the glycolytic intermediate dihydroxyacetone phosphate (DHAP) to sn-glycerol 3-phosphate (G3P), the key precursor for phospholipid synthesis. The chain is Glycerol-3-phosphate dehydrogenase [NAD(P)+] from Fusobacterium nucleatum subsp. nucleatum (strain ATCC 25586 / DSM 15643 / BCRC 10681 / CIP 101130 / JCM 8532 / KCTC 2640 / LMG 13131 / VPI 4355).